The chain runs to 380 residues: Flap endonuclease 1 (380 aa).

The interval 1-105 (MGIKGLAQVL…GELAKRVARH (105 aa)) is N-domain. Residue aspartate 34 participates in Mg(2+) binding. DNA is bound by residues arginine 47 and arginine 71. Residues aspartate 87, glutamate 159, glutamate 161, aspartate 180, and aspartate 182 each coordinate Mg(2+). Positions 123–254 (MVDRFAKRTV…ARAVELIRQY (132 aa)) are I-domain. Glutamate 159 is a binding site for DNA. Residues glycine 232 and aspartate 234 each coordinate DNA. Aspartate 234 lines the Mg(2+) pocket. The interaction with PCNA stretch occupies residues 337-345 (PQGRLDSFF). The disordered stretch occupies residues 340–380 (RLDSFFKPVPSSPKKPVDTKSKGSAKRKRDSNKGGESKKKR). The span at 342–353 (DSFFKPVPSSPK) shows a compositional bias: low complexity. A phosphoserine mark is found at serine 350 and serine 351. Basic and acidic residues predominate over residues 370–380 (SNKGGESKKKR).

It belongs to the XPG/RAD2 endonuclease family. FEN1 subfamily. As to quaternary structure, interacts with PCNA. Three molecules of rad2 bind to one PCNA trimer with each molecule binding to one PCNA monomer. PCNA stimulates the nuclease activity without altering cleavage specificity. It depends on Mg(2+) as a cofactor. Phosphorylated. Phosphorylation upon DNA damage induces relocalization to the nuclear plasma.

Its subcellular location is the nucleus. The protein localises to the nucleolus. It is found in the nucleoplasm. The protein resides in the mitochondrion. Its function is as follows. Structure-specific nuclease with 5'-flap endonuclease and 5'-3' exonuclease activities involved in DNA replication and repair. During DNA replication, cleaves the 5'-overhanging flap structure that is generated by displacement synthesis when DNA polymerase encounters the 5'-end of a downstream Okazaki fragment. It enters the flap from the 5'-end and then tracks to cleave the flap base, leaving a nick for ligation. Also involved in the long patch base excision repair (LP-BER) pathway, by cleaving within the apurinic/apyrimidinic (AP) site-terminated flap. Acts as a genome stabilization factor that prevents flaps from equilibrating into structures that lead to duplications and deletions. Also possesses 5'-3' exonuclease activity on nicked or gapped double-stranded DNA, and exhibits RNase H activity. Also involved in replication and repair of rDNA and in repairing mitochondrial DNA. The protein is Flap endonuclease 1 of Schizosaccharomyces pombe (strain 972 / ATCC 24843) (Fission yeast).